Reading from the N-terminus, the 765-residue chain is 5-methyltetrahydropteroyltriglutamate--homocysteine methyltransferase 1 (765 aa).

Lys18 and Asn116 together coordinate 5-methyltetrahydropteroyltri-L-glutamate. Position 437-439 (437-439) interacts with L-homocysteine; that stretch reads IGS. Residues 437–439 and Glu490 each bind L-methionine; that span reads IGS. 5-methyltetrahydropteroyltri-L-glutamate is bound by residues 521-522 and Trp567; that span reads RC. Residue Asp605 coordinates L-homocysteine. Asp605 serves as a coordination point for L-methionine. His647, Cys649, His658, Asp662, and Glu671 together coordinate Zn(2+). His701 (proton donor) is an active-site residue. Position 733 (Cys733) interacts with Zn(2+).

Belongs to the vitamin-B12 independent methionine synthase family. Requires Zn(2+) as cofactor. As to expression, expressed in leaves, stems, flowers, siliques and seeds.

Its subcellular location is the cytoplasm. The protein localises to the cytosol. It carries out the reaction 5-methyltetrahydropteroyltri-L-glutamate + L-homocysteine = tetrahydropteroyltri-L-glutamate + L-methionine. It participates in amino-acid biosynthesis; L-methionine biosynthesis via de novo pathway; L-methionine from L-homocysteine (MetE route): step 1/1. Functionally, catalyzes the transfer of a methyl group from 5-methyltetrahydrofolate to homocysteine resulting in methionine formation. This Arabidopsis thaliana (Mouse-ear cress) protein is 5-methyltetrahydropteroyltriglutamate--homocysteine methyltransferase 1 (MS1).